We begin with the raw amino-acid sequence, 99 residues long: Carboxysome shell vertex protein CcmL (99 aa).

A BMV domain is found at 1 to 83 (MRIAKVRGTV…VDAAVIAIID (83 aa)).

This sequence belongs to the CcmL/EutN family. CcmL subfamily. In terms of assembly, homopentamer. Interacts with full-length CcmM.

It is found in the carboxysome. Functionally, probably forms vertices in the carboxysome, a polyhedral inclusion where RuBisCO (ribulose bisphosphate carboxylase, rbcL-rbcS) is sequestered. Has been modeled to induce curvature upon insertion into an otherwise flat hexagonal molecular layer of CcmK subunits. In terms of biological role, beta-carboxysome assembly initiates when soluble RuBisCO is condensed into a liquid matrix in a pre-carboxysome by the RbcS-like domains of probably both CcmM58 and CcmM35. CcmN interacts with the N-terminus of CcmM58, and then recruits the CcmK2 major shell protein via CcmN's encapsulation peptide. Shell formation requires CcmK proteins and CcmO. CcmL caps the otherwise elongated carboxysome. Once fully encapsulated carboxysomes are formed, they migrate within the cell probably via interactions with the cytoskeleton. The chain is Carboxysome shell vertex protein CcmL from Synechococcus elongatus (strain ATCC 33912 / PCC 7942 / FACHB-805) (Anacystis nidulans R2).